The sequence spans 460 residues: MTOR-associated protein MEAK7 (460 aa).

One can recognise a TLDc domain in the interval 246–414; sequence SLLDLPAVMH…IHTVEVWAVG (169 aa).

Its subcellular location is the membrane. The protein localises to the cytoplasm. The protein resides in the lysosome. Functionally, activates an alternative mTOR signaling to regulate cell proliferation and migration. The chain is MTOR-associated protein MEAK7 (meak7) from Xenopus laevis (African clawed frog).